A 624-amino-acid chain; its full sequence is Dihydroxy-acid dehydratase (624 aa).

Position 81 (aspartate 81) interacts with Mg(2+). Cysteine 122 serves as a coordination point for [2Fe-2S] cluster. Aspartate 123 and lysine 124 together coordinate Mg(2+). N6-carboxylysine is present on lysine 124. Cysteine 195 lines the [2Fe-2S] cluster pocket. Glutamate 499 is a binding site for Mg(2+). Serine 525 (proton acceptor) is an active-site residue.

It belongs to the IlvD/Edd family. In terms of assembly, homodimer. [2Fe-2S] cluster serves as cofactor. Mg(2+) is required as a cofactor.

It carries out the reaction (2R)-2,3-dihydroxy-3-methylbutanoate = 3-methyl-2-oxobutanoate + H2O. The catalysed reaction is (2R,3R)-2,3-dihydroxy-3-methylpentanoate = (S)-3-methyl-2-oxopentanoate + H2O. It participates in amino-acid biosynthesis; L-isoleucine biosynthesis; L-isoleucine from 2-oxobutanoate: step 3/4. Its pathway is amino-acid biosynthesis; L-valine biosynthesis; L-valine from pyruvate: step 3/4. Functions in the biosynthesis of branched-chain amino acids. Catalyzes the dehydration of (2R,3R)-2,3-dihydroxy-3-methylpentanoate (2,3-dihydroxy-3-methylvalerate) into 2-oxo-3-methylpentanoate (2-oxo-3-methylvalerate) and of (2R)-2,3-dihydroxy-3-methylbutanoate (2,3-dihydroxyisovalerate) into 2-oxo-3-methylbutanoate (2-oxoisovalerate), the penultimate precursor to L-isoleucine and L-valine, respectively. This is Dihydroxy-acid dehydratase from Shewanella baltica (strain OS185).